We begin with the raw amino-acid sequence, 251 residues long: Octanoyltransferase (251 aa).

Residues 49–230 form the BPL/LPL catalytic domain; it reads DEIPDQLLIL…ALDDALAGRL (182 aa). Residues 87-94, 160-162, and 173-175 each bind substrate; these read RGGRITWH, AIG, and GVA. Catalysis depends on Cys191, which acts as the Acyl-thioester intermediate.

The protein belongs to the LipB family.

The protein localises to the cytoplasm. The catalysed reaction is octanoyl-[ACP] + L-lysyl-[protein] = N(6)-octanoyl-L-lysyl-[protein] + holo-[ACP] + H(+). Its pathway is protein modification; protein lipoylation via endogenous pathway; protein N(6)-(lipoyl)lysine from octanoyl-[acyl-carrier-protein]: step 1/2. In terms of biological role, catalyzes the transfer of endogenously produced octanoic acid from octanoyl-acyl-carrier-protein onto the lipoyl domains of lipoate-dependent enzymes. Lipoyl-ACP can also act as a substrate although octanoyl-ACP is likely to be the physiological substrate. In Corynebacterium glutamicum (strain R), this protein is Octanoyltransferase.